Here is a 95-residue protein sequence, read N- to C-terminus: Small ribosomal subunit protein uS19 (95 aa).

This sequence belongs to the universal ribosomal protein uS19 family.

In terms of biological role, protein S19 forms a complex with S13 that binds strongly to the 16S ribosomal RNA. The sequence is that of Small ribosomal subunit protein uS19 (rpsS) from Treponema pallidum (strain Nichols).